The chain runs to 357 residues: UDP-N-acetylglucosamine--N-acetylmuramyl-(pentapeptide) pyrophosphoryl-undecaprenol N-acetylglucosamine transferase (357 aa).

Residues 13–15 (SAG), Arg-166, Ser-197, and Gln-292 contribute to the UDP-N-acetyl-alpha-D-glucosamine site.

This sequence belongs to the glycosyltransferase 28 family. MurG subfamily.

The protein resides in the cell membrane. The enzyme catalyses di-trans,octa-cis-undecaprenyl diphospho-N-acetyl-alpha-D-muramoyl-L-alanyl-D-glutamyl-meso-2,6-diaminopimeloyl-D-alanyl-D-alanine + UDP-N-acetyl-alpha-D-glucosamine = di-trans,octa-cis-undecaprenyl diphospho-[N-acetyl-alpha-D-glucosaminyl-(1-&gt;4)]-N-acetyl-alpha-D-muramoyl-L-alanyl-D-glutamyl-meso-2,6-diaminopimeloyl-D-alanyl-D-alanine + UDP + H(+). The protein operates within cell wall biogenesis; peptidoglycan biosynthesis. In terms of biological role, cell wall formation. Catalyzes the transfer of a GlcNAc subunit on undecaprenyl-pyrophosphoryl-MurNAc-pentapeptide (lipid intermediate I) to form undecaprenyl-pyrophosphoryl-MurNAc-(pentapeptide)GlcNAc (lipid intermediate II). The sequence is that of UDP-N-acetylglucosamine--N-acetylmuramyl-(pentapeptide) pyrophosphoryl-undecaprenol N-acetylglucosamine transferase from Clostridium novyi (strain NT).